We begin with the raw amino-acid sequence, 208 residues long: Large ribosomal subunit protein eL13 (208 aa).

Phosphoserine is present on residues serine 177 and serine 180.

It belongs to the eukaryotic ribosomal protein eL13 family. As to quaternary structure, component of the large ribosomal subunit (LSU). Mature yeast ribosomes consist of a small (40S) and a large (60S) subunit. The 40S small subunit contains 1 molecule of ribosomal RNA (18S rRNA) and at least 33 different proteins. The large 60S subunit contains 3 rRNA molecules (25S, 5.8S and 5S rRNA) and at least 46 different proteins.

Its subcellular location is the cytoplasm. Component of the ribosome, a large ribonucleoprotein complex responsible for the synthesis of proteins in the cell. The small ribosomal subunit (SSU) binds messenger RNAs (mRNAs) and translates the encoded message by selecting cognate aminoacyl-transfer RNA (tRNA) molecules. The large subunit (LSU) contains the ribosomal catalytic site termed the peptidyl transferase center (PTC), which catalyzes the formation of peptide bonds, thereby polymerizing the amino acids delivered by tRNAs into a polypeptide chain. The nascent polypeptides leave the ribosome through a tunnel in the LSU and interact with protein factors that function in enzymatic processing, targeting, and the membrane insertion of nascent chains at the exit of the ribosomal tunnel. The sequence is that of Large ribosomal subunit protein eL13 (rpl13) from Schizosaccharomyces pombe (strain 972 / ATCC 24843) (Fission yeast).